Consider the following 289-residue polypeptide: Protein charybde (289 aa).

The disordered stretch occupies residues 119-142 (TAHHPGHGHGPGPSPMPASPLQST).

Belongs to the DDIT4 family.

Its subcellular location is the cytoplasm. Its function is as follows. Inhibits cell growth by regulating the Tor pathway upstream of the Tsc1-Tsc2 complex and downstream of Akt1. Acts as a cell death activator during head development. The polypeptide is Protein charybde (chrb) (Drosophila pseudoobscura pseudoobscura (Fruit fly)).